A 632-amino-acid polypeptide reads, in one-letter code: PWWP domain-containing protein 5 (632 aa).

One can recognise a PWWP domain in the interval 97 to 158 (DSDLVWAKLR…ASQIKPFHQN (62 aa)). Residues 310–452 (RKTDYKDNAE…AERKISSPDE (143 aa)) are disordered. Composition is skewed to basic and acidic residues over residues 313-326 (DYKDNAEQTKEKTL), 339-364 (STEKLDGKSHSEKKRKVESSESGKSE), 371-383 (QQKEDSVSKHSNE), and 425-449 (KSTEVENEKTKKPRHQELAERKISS). The Nuclear localization signal motif lies at 352–359 (KRKVESSE).

Belongs to the PDP family. As to quaternary structure, component of the PRC2 (polycomb repressive complex 2) complex which regulates histone methylation on histone H3K27.

It localises to the nucleus. May influence gene expression by regulating the function of the PRC2 complex and modulating H3K27me3 level. This is PWWP domain-containing protein 5 from Arabidopsis thaliana (Mouse-ear cress).